The primary structure comprises 126 residues: Holo-[acyl-carrier-protein] synthase (126 aa).

2 residues coordinate Mg(2+): aspartate 9 and glutamate 58.

This sequence belongs to the P-Pant transferase superfamily. AcpS family. Requires Mg(2+) as cofactor.

It is found in the cytoplasm. It catalyses the reaction apo-[ACP] + CoA = holo-[ACP] + adenosine 3',5'-bisphosphate + H(+). Transfers the 4'-phosphopantetheine moiety from coenzyme A to a Ser of acyl-carrier-protein. The sequence is that of Holo-[acyl-carrier-protein] synthase from Escherichia fergusonii (strain ATCC 35469 / DSM 13698 / CCUG 18766 / IAM 14443 / JCM 21226 / LMG 7866 / NBRC 102419 / NCTC 12128 / CDC 0568-73).